We begin with the raw amino-acid sequence, 178 residues long: Large ribosomal subunit protein uL6 (178 aa).

The protein belongs to the universal ribosomal protein uL6 family. As to quaternary structure, part of the 50S ribosomal subunit.

Its function is as follows. This protein binds to the 23S rRNA, and is important in its secondary structure. It is located near the subunit interface in the base of the L7/L12 stalk, and near the tRNA binding site of the peptidyltransferase center. This is Large ribosomal subunit protein uL6 from Thermoplasma acidophilum (strain ATCC 25905 / DSM 1728 / JCM 9062 / NBRC 15155 / AMRC-C165).